Consider the following 160-residue polypeptide: Cytochrome b6-f complex subunit 4 (160 aa).

Transmembrane regions (helical) follow at residues 36-56, 95-115, and 131-151; these read LLYI…GLAV, LLGV…PFLE, and TVFL…TLPI.

The protein belongs to the cytochrome b family. PetD subfamily. In terms of assembly, the 4 large subunits of the cytochrome b6-f complex are cytochrome b6, subunit IV (17 kDa polypeptide, petD), cytochrome f and the Rieske protein, while the 4 small subunits are petG, petL, petM and petN. The complex functions as a dimer.

It localises to the plastid. The protein localises to the chloroplast thylakoid membrane. In terms of biological role, component of the cytochrome b6-f complex, which mediates electron transfer between photosystem II (PSII) and photosystem I (PSI), cyclic electron flow around PSI, and state transitions. This is Cytochrome b6-f complex subunit 4 from Solanum tuberosum (Potato).